Here is a 712-residue protein sequence, read N- to C-terminus: T-box transcription factor TBX2 (712 aa).

A DNA-binding region (T-box) is located at residues 109 to 287; sequence LEAKELWDQF…NNPFAKGFRD (179 aa). Positions 313–450 are disordered; the sequence is PERDGAESDA…EGKEQGLAPL (138 aa). Pro residues predominate over residues 326-336; it reads DPPPAREPPTS. Phosphoserine is present on residues Ser-336, Ser-342, and Ser-360. 3 stretches are compositionally biased toward basic and acidic residues: residues 363–372, 391–409, and 421–444; these read EPERLSEERA, TEPE…KEPA, and SLEK…EGKE. The segment at 518–601 is repression domain 1 (RD1); sequence GGNGGGGGPG…ATSAAAAAAA (84 aa). Ser-622, Ser-653, Ser-657, and Ser-676 each carry phosphoserine. The segment at 637-687 is disordered; that stretch reads LTTGLASEGSKAAGGNSREPSPLPELALRKVGAPSRGALSPSGSAKEAANE.

Binds DNA as a monomer. Interacts with PML (isoform PML-2, isoform PML-3 and isoform PML-4). Expressed primarily in adult in kidney, lung, and placenta. Weak expression in heart and ovary.

It is found in the nucleus. Functionally, transcription factor which acts as a transcriptional repressor. May also function as a transcriptional activator. Binds to the palindromic T site 5'-TTCACACCTAGGTGTGAA-3' DNA sequence, or a half-site, which are present in the regulatory region of several genes. Required for cardiac atrioventricular canal formation. May cooperate with NKX2.5 to negatively modulate expression of NPPA/ANF in the atrioventricular canal. May play a role as a positive regulator of TGFB2 expression, perhaps acting in concert with GATA4 in the developing outflow tract myocardium. Plays a role in limb pattern formation. Acts as a transcriptional repressor of ADAM10 gene expression, perhaps in concert with histone deacetylase HDAC1 as cofactor. Involved in branching morphogenesis in both developing lungs and adult mammary glands, via negative modulation of target genes; acting redundantly with TBX3. Required, together with TBX3, to maintain cell proliferation in the embryonic lung mesenchyme; perhaps acting downstream of SHH, BMP and TGFbeta signaling. Involved in modulating early inner ear development, acting independently of, and also redundantly with TBX3, in different subregions of the developing ear. Acts as a negative regulator of PML function in cellular senescence. Acts as a negative regulator of expression of CDKN1A/p21, IL33 and CCN4; repression of CDKN1A is enhanced in response to UV-induced stress, perhaps as a result of phosphorylation by p38 MAPK. Negatively modulates expression of CDKN2A/p14ARF and CDH1/E-cadherin. Plays a role in induction of the epithelial-mesenchymal transition (EMT). Plays a role in melanocyte proliferation, perhaps via regulation of cyclin CCND1. Involved in melanogenesis, acting via negative modulation of expression of DHICA oxidase/TYRP1 and P protein/OCA2. Involved in regulating retinal pigment epithelium (RPE) cell proliferation, perhaps via negatively modulating transcription of the transcription factor CEBPD. In Homo sapiens (Human), this protein is T-box transcription factor TBX2 (TBX2).